The following is a 321-amino-acid chain: Digestive cysteine proteinase 3 (321 aa).

A signal peptide spans 1–16 (MKVAALFLCGLALATA). A propeptide spans 17–106 (SPSWDHFKTQ…AVFTAEAGPM (90 aa)) (activation peptide). 3 cysteine pairs are disulfide-bonded: C127-C170, C161-C203, and C261-C310. C130 is an active-site residue. Catalysis depends on residues H268 and N288.

The protein belongs to the peptidase C1 family.

With respect to regulation, inhibited by E-64, antipain, leupeptin, heavy metal ions, iodoacetic acid, dithionitrobenzene, p-hydroxymercuri-benzoate; activated by mercaptoethanol and dithiothreitol. This chain is Digestive cysteine proteinase 3 (LCP3), found in Homarus americanus (American lobster).